Consider the following 212-residue polypeptide: External core antigen (212 aa).

The first 19 residues, 1–19, serve as a signal peptide directing secretion; it reads MQLFHLCLIISCSCPTVQA. The tract at residues 25 to 27 is HBEAG; sequence GWL. Positions 165–212 are disordered; that stretch reads NAPILSTLPETTVVRRRGRSPRRRTPSPRRRRSQSPRRRRSQSRESQC. The segment covering 178 to 205 has biased composition (basic residues); sequence VRRRGRSPRRRTPSPRRRRSQSPRRRRS. Residues 184 to 190 form a 1; half-length repeat; that stretch reads SPRRRTP. The interval 184-206 is 3 X 8 AA repeats of S-P-R-R-R-R-S-Q; sequence SPRRRTPSPRRRRSQSPRRRRSQ. Positions 184–212 are excised as a propeptide; the sequence is SPRRRTPSPRRRRSQSPRRRRSQSRESQC. 2 tandem repeats follow at residues 191 to 198 and 199 to 206.

The protein belongs to the orthohepadnavirus precore antigen family. Homodimerizes. Phosphorylated. Post-translationally, cleaved by host furin.

The protein resides in the secreted. It localises to the host nucleus. May regulate immune response to the intracellular capsid in acting as a T-cell tolerogen, by having an immunoregulatory effect which prevents destruction of infected cells by cytotoxic T-cells. This immune regulation may predispose to chronicity during perinatal infections and prevent severe liver injury during adult infections. In Hepatitis B virus genotype B2 (isolate Indonesia/pIDW420/1988) (HBV-B), this protein is External core antigen.